A 644-amino-acid polypeptide reads, in one-letter code: Protein cueball (644 aa).

A signal peptide spans 1–26 (MIRIRFGMDVLLVLLLATCLLSPTHG). The Extracellular portion of the chain corresponds to 27 to 531 (TPLEWDFAVT…VCLTPTVWTS (505 aa)). N-linked (GlcNAc...) asparagine glycans are attached at residues Asn82 and Asn108. LDL-receptor class B repeat units lie at residues 121 to 166 (TNLF…DVCR), 167 to 211 (RKLY…DQLS), and 212 to 257 (DRLF…TNDA). 2 N-linked (GlcNAc...) asparagine glycosylation sites follow: Asn175 and Asn190. N-linked (GlcNAc...) asparagine glycosylation is present at Asn313. EGF-like domains are found at residues 398-430 (EIRE…FTGE) and 433-471 (EVSV…ARCE). 5 cysteine pairs are disulfide-bonded: Cys402–Cys411, Cys406–Cys421, Cys437–Cys447, Cys441–Cys459, and Cys461–Cys470. 2 N-linked (GlcNAc...) asparagine glycosylation sites follow: Asn473 and Asn508. The helical transmembrane segment at 532–552 (SVIIILVVGIVSSLLLVAVIV) threads the bilayer. Residues 553–644 (HGIRRLYKPK…LIHNMEDDLY (92 aa)) are Cytoplasmic-facing.

Belongs to the cueball family.

It localises to the cell membrane. In terms of biological role, has a role in spermatogenesis and oogenesis. The polypeptide is Protein cueball (Drosophila yakuba (Fruit fly)).